We begin with the raw amino-acid sequence, 348 residues long: UDP-glucose 4-epimerase (348 aa).

NAD(+)-binding positions include 12-14 (GYI), 33-37 (DNFHN), 66-67 (DI), Phe-88, and Lys-92. Residue 132 to 134 (SAT) participates in substrate binding. The active-site Proton acceptor is Tyr-157. 2 residues coordinate NAD(+): Lys-161 and Tyr-185. Residues 185–187 (YFN), 206–208 (NNL), 224–226 (NVF), Arg-239, and 300–303 (REGD) each bind substrate.

Belongs to the NAD(P)-dependent epimerase/dehydratase family. In terms of assembly, homodimer. NAD(+) serves as cofactor.

The catalysed reaction is UDP-alpha-D-glucose = UDP-alpha-D-galactose. It catalyses the reaction UDP-N-acetyl-alpha-D-glucosamine = UDP-N-acetyl-alpha-D-galactosamine. Its pathway is carbohydrate metabolism; galactose metabolism. Catalyzes two distinct but analogous reactions: the reversible epimerization of UDP-glucose to UDP-galactose and the reversible epimerization of UDP-N-acetylglucosamine to UDP-N-acetylgalactosamine. The reaction with UDP-Gal plays a critical role in the Leloir pathway of galactose catabolism in which galactose is converted to the glycolytic intermediate glucose 6-phosphate. It contributes to the catabolism of dietary galactose and enables the endogenous biosynthesis of both UDP-Gal and UDP-GalNAc when exogenous sources are limited. Both UDP-sugar interconversions are important in the synthesis of glycoproteins and glycolipids. The protein is UDP-glucose 4-epimerase of Homo sapiens (Human).